Reading from the N-terminus, the 58-residue chain is Large ribosomal subunit protein bL32c (58 aa).

The protein belongs to the bacterial ribosomal protein bL32 family.

Its subcellular location is the plastid. The protein resides in the chloroplast. The protein is Large ribosomal subunit protein bL32c (rpl32) of Adiantum capillus-veneris (Maidenhair fern).